A 231-amino-acid chain; its full sequence is Cytochrome c oxidase assembly factor 7 (231 aa).

An N-acetylalanine modification is found at Ala2. Sel1-like repeat units lie at residues 34 to 66 (PEGC…EKYG), 68 to 104 (GDSC…EKPG), 108 to 146 (VESC…DGGY), 147 to 183 (AASC…DLGH), and 184 to 219 (VWAC…QLHK).

This sequence belongs to the hcp beta-lactamase family. As to quaternary structure, interacts with CHCHD4/MIA40 through transient intermolecular disulfide bonds.

Its subcellular location is the mitochondrion intermembrane space. Its function is as follows. Required for assembly of mitochondrial respiratory chain complex I and complex IV. The sequence is that of Cytochrome c oxidase assembly factor 7 (Coa7) from Mus musculus (Mouse).